We begin with the raw amino-acid sequence, 917 residues long: Spermatogenesis-associated protein 31D3 (917 aa).

Residues 29–49 (FICLSGLGLFILYLFYMVLTL) traverse the membrane as a helical segment. Disordered regions lie at residues 55-80 (EKNNDTQKHQGRARRKRKSVTFKDRK), 152-195 (SVSP…PPPL), and 773-797 (SQETAPKNHLLHDPETSSEEDLRSN). Basic residues predominate over residues 63–74 (HQGRARRKRKSV). A compositionally biased stretch (low complexity) spans 152-163 (SVSPLASSASGA). Positions 164 to 177 (ESSFTLASTPSATT) are enriched in polar residues. Over residues 782-797 (LLHDPETSSEEDLRSN) the composition is skewed to basic and acidic residues.

Belongs to the SPATA31 family.

The protein resides in the membrane. Its function is as follows. May play a role in spermatogenesis. The protein is Spermatogenesis-associated protein 31D3 (SPATA31D3) of Homo sapiens (Human).